The primary structure comprises 485 residues: Protein disulfide isomerase-like 5-4 (485 aa).

Residues 114-263 (VPTGSEFHPG…LVAAMETYVA (150 aa)) form the Thioredoxin domain. The active-site Nucleophile is the cysteine 170. A helical transmembrane segment spans residues 444–464 (FSHFITNVCAIIGGVFTVAGI).

The protein belongs to the protein disulfide isomerase family.

It is found in the membrane. Functionally, acts as a protein-folding catalyst that interacts with nascent polypeptides to catalyze the formation, isomerization, and reduction or oxidation of disulfide bonds. May play a role in storage protein biogenesis. The protein is Protein disulfide isomerase-like 5-4 (PDIL5-4) of Oryza sativa subsp. japonica (Rice).